Reading from the N-terminus, the 337-residue chain is Ketol-acid reductoisomerase (NADP(+)) (337 aa).

Residues 3-183 (VEMFYDDDAD…GGTRAGVIKT (181 aa)) form the KARI N-terminal Rossmann domain. NADP(+)-binding positions include 26–29 (YGSQ), lysine 49, serine 52, serine 54, and 84–87 (DTAQ). Histidine 109 is an active-site residue. Residue glycine 135 participates in NADP(+) binding. The KARI C-terminal knotted domain maps to 184–329 (TFKEETETDL…KKLRDLMSWV (146 aa)). Positions 192, 196, 228, and 232 each coordinate Mg(2+). Serine 253 is a binding site for substrate.

The protein belongs to the ketol-acid reductoisomerase family. Requires Mg(2+) as cofactor.

The enzyme catalyses (2R)-2,3-dihydroxy-3-methylbutanoate + NADP(+) = (2S)-2-acetolactate + NADPH + H(+). It carries out the reaction (2R,3R)-2,3-dihydroxy-3-methylpentanoate + NADP(+) = (S)-2-ethyl-2-hydroxy-3-oxobutanoate + NADPH + H(+). Its pathway is amino-acid biosynthesis; L-isoleucine biosynthesis; L-isoleucine from 2-oxobutanoate: step 2/4. It participates in amino-acid biosynthesis; L-valine biosynthesis; L-valine from pyruvate: step 2/4. Functionally, involved in the biosynthesis of branched-chain amino acids (BCAA). Catalyzes an alkyl-migration followed by a ketol-acid reduction of (S)-2-acetolactate (S2AL) to yield (R)-2,3-dihydroxy-isovalerate. In the isomerase reaction, S2AL is rearranged via a Mg-dependent methyl migration to produce 3-hydroxy-3-methyl-2-ketobutyrate (HMKB). In the reductase reaction, this 2-ketoacid undergoes a metal-dependent reduction by NADPH to yield (R)-2,3-dihydroxy-isovalerate. This chain is Ketol-acid reductoisomerase (NADP(+)), found in Rhodococcus jostii (strain RHA1).